The chain runs to 166 residues: CDP-archaeol synthase (166 aa).

5 helical membrane-spanning segments follow: residues 7-27, 55-75, 78-98, 116-136, and 138-158; these read LLLSILIYLPAFIANGSGPFI, LIVALTFGTTVGVIISKFFTA, TLISFLESLFAMIGDMIGAFI, LDFVLGASLILVLMRVNITWY, and FLFICGLAFFLHQGTNYVAYL.

The protein belongs to the CDP-archaeol synthase family. It depends on Mg(2+) as a cofactor.

It is found in the cell membrane. The catalysed reaction is 2,3-bis-O-(geranylgeranyl)-sn-glycerol 1-phosphate + CTP + H(+) = CDP-2,3-bis-O-(geranylgeranyl)-sn-glycerol + diphosphate. It functions in the pathway membrane lipid metabolism; glycerophospholipid metabolism. Its function is as follows. Catalyzes the formation of CDP-2,3-bis-(O-geranylgeranyl)-sn-glycerol (CDP-archaeol) from 2,3-bis-(O-geranylgeranyl)-sn-glycerol 1-phosphate (DGGGP) and CTP. This reaction is the third ether-bond-formation step in the biosynthesis of archaeal membrane lipids. This chain is CDP-archaeol synthase, found in Saccharolobus islandicus (strain Y.N.15.51 / Yellowstone #2) (Sulfolobus islandicus).